A 950-amino-acid polypeptide reads, in one-letter code: Glycine dehydrogenase (decarboxylating) (950 aa).

Residue lysine 699 is modified to N6-(pyridoxal phosphate)lysine.

The protein belongs to the GcvP family. In terms of assembly, the glycine cleavage system is composed of four proteins: P, T, L and H. Requires pyridoxal 5'-phosphate as cofactor.

The catalysed reaction is N(6)-[(R)-lipoyl]-L-lysyl-[glycine-cleavage complex H protein] + glycine + H(+) = N(6)-[(R)-S(8)-aminomethyldihydrolipoyl]-L-lysyl-[glycine-cleavage complex H protein] + CO2. In terms of biological role, the glycine cleavage system catalyzes the degradation of glycine. The P protein binds the alpha-amino group of glycine through its pyridoxal phosphate cofactor; CO(2) is released and the remaining methylamine moiety is then transferred to the lipoamide cofactor of the H protein. This is Glycine dehydrogenase (decarboxylating) from Chromobacterium violaceum (strain ATCC 12472 / DSM 30191 / JCM 1249 / CCUG 213 / NBRC 12614 / NCIMB 9131 / NCTC 9757 / MK).